A 432-amino-acid chain; its full sequence is Histidine--tRNA ligase (432 aa).

The protein belongs to the class-II aminoacyl-tRNA synthetase family.

The protein localises to the cytoplasm. It catalyses the reaction tRNA(His) + L-histidine + ATP = L-histidyl-tRNA(His) + AMP + diphosphate + H(+). The polypeptide is Histidine--tRNA ligase (Pyrococcus furiosus (strain ATCC 43587 / DSM 3638 / JCM 8422 / Vc1)).